The following is a 225-amino-acid chain: Perlwapin-like protein (225 aa).

Residues 1 to 19 form the signal peptide; that stretch reads MNHLWLFIVTVSCIYLVYG. 4 disulfides stabilise this stretch: C27-C57, C36-C61, C43-C56, and C49-C65. The WAP 1; atypical domain maps to 27–68; it reads CKVKFMGTACPLGRLVCEEDGDCLGVNQVCCYDGCGTTCHNK. N67 carries N-linked (GlcNAc...) asparagine glycosylation. The region spanning 117–169 is the WAP 2 domain; the sequence is IIPSPELLCPVVTVRYAFCRFSTYTPCHTSNDCAVPGMKCCPDVCGKRCKFPI. Disulfide bonds link C125-C157, C135-C161, C143-C156, and C149-C165. N-linked (GlcNAc...) asparagine glycosylation occurs at N170. The interval 176–225 is disordered; the sequence is QFQQTPLKPTVPLPQYQQTPLQPTVPSSQPPLQPTVPSPQSYNYKGACST. Residues 188–201 show a composition bias toward low complexity; that stretch reads LPQYQQTPLQPTVP. The span at 203–212 shows a compositional bias: pro residues; sequence SQPPLQPTVP. The span at 213-225 shows a compositional bias: polar residues; it reads SPQSYNYKGACST.

As to expression, component of the acid-soluble organic matrix of calcified layers of the shell (at protein level).

The protein resides in the secreted. The protein is Perlwapin-like protein of Lottia gigantea (Giant owl limpet).